Consider the following 452-residue polypeptide: Probable ECA polymerase (452 aa).

The next 11 helical transmembrane spans lie at 6–26, 37–57, 63–83, 118–138, 155–175, 181–201, 207–227, 228–248, 341–361, 378–398, and 410–430; these read FSGLLVVWLLSTLFIATLTWF, VFFSLLFLLTFFFGFPLTSVL, VGVAPPEILLQALLSAACFYG, VILMGIALVSVAIFFMHNGFL, GVALKRFFYFFIPAMLVVYFL, AWLFFLVSTVAFGLLTYMIVG, IIIAFAIFLFIGIIRGWISLW, MLAAAGVLGIVGMFWLALKRY, LVVMGGALFIPLGAIVVGLII, YKAAILHSFCFGAIFNMIVLA, and VFFLVVFGASLLVAKLLFWLF.

It belongs to the WzyE family. As to quaternary structure, probably part of a complex composed of WzxE, WzyE and WzzE.

The protein resides in the cell inner membrane. The protein operates within bacterial outer membrane biogenesis; enterobacterial common antigen biosynthesis. Probably involved in the polymerization of enterobacterial common antigen (ECA) trisaccharide repeat units. This is Probable ECA polymerase from Salmonella heidelberg (strain SL476).